Here is a 358-residue protein sequence, read N- to C-terminus: Ion-translocating oxidoreductase complex subunit D (358 aa).

7 consecutive transmembrane segments (helical) span residues Val16–Trp36, Phe38–Val58, Ile68–Pro90, Ala128–Leu148, Phe206–Leu226, Ile236–Pro256, and Pro286–Ile306.

The protein belongs to the NqrB/RnfD family. In terms of assembly, the complex is composed of six subunits: RnfA, RnfB, RnfC, RnfD, RnfE and RnfG. It depends on FMN as a cofactor.

The protein resides in the cellular chromatophore membrane. Its function is as follows. Part of a membrane-bound complex that couples electron transfer with translocation of ions across the membrane. Required for nitrogen fixation. Involved in electron transfer to nitrogenase. This is Ion-translocating oxidoreductase complex subunit D from Rhodobacter capsulatus (Rhodopseudomonas capsulata).